Consider the following 619-residue polypeptide: 1-deoxy-D-xylulose-5-phosphate synthase (619 aa).

Residues histidine 74 and 115 to 117 each bind thiamine diphosphate; that span reads GHS. Aspartate 146 contributes to the Mg(2+) binding site. Thiamine diphosphate contacts are provided by residues 147 to 148, asparagine 175, tyrosine 285, and glutamate 365; that span reads GA. Asparagine 175 provides a ligand contact to Mg(2+).

The protein belongs to the transketolase family. DXPS subfamily. Homodimer. Mg(2+) is required as a cofactor. The cofactor is thiamine diphosphate.

It carries out the reaction D-glyceraldehyde 3-phosphate + pyruvate + H(+) = 1-deoxy-D-xylulose 5-phosphate + CO2. It participates in metabolic intermediate biosynthesis; 1-deoxy-D-xylulose 5-phosphate biosynthesis; 1-deoxy-D-xylulose 5-phosphate from D-glyceraldehyde 3-phosphate and pyruvate: step 1/1. Catalyzes the acyloin condensation reaction between C atoms 2 and 3 of pyruvate and glyceraldehyde 3-phosphate to yield 1-deoxy-D-xylulose-5-phosphate (DXP). This Clostridium acetobutylicum (strain ATCC 824 / DSM 792 / JCM 1419 / IAM 19013 / LMG 5710 / NBRC 13948 / NRRL B-527 / VKM B-1787 / 2291 / W) protein is 1-deoxy-D-xylulose-5-phosphate synthase.